Reading from the N-terminus, the 348-residue chain is Ketol-acid reductoisomerase (NADP(+)) (348 aa).

Residues 1-179 (MDVHYDADPA…GGTHAGVIET (179 aa)) form the KARI N-terminal Rossmann domain. Residues 22 to 25 (YGSQ), R45, S48, S50, and 80 to 83 (DQHQ) each bind NADP(+). H105 is a catalytic residue. G131 lines the NADP(+) pocket. Residues 180–325 (TFKDETETDL…QTLRGMMPWL (146 aa)) form the KARI C-terminal knotted domain. Mg(2+)-binding residues include D188, E192, E224, and E228. A substrate-binding site is contributed by S249. Residues 323 to 348 (PWLNGDETSADEDAPDAADTAPASSS) form a disordered region. Low complexity predominate over residues 339–348 (AADTAPASSS).

It belongs to the ketol-acid reductoisomerase family. The cofactor is Mg(2+).

The catalysed reaction is (2R)-2,3-dihydroxy-3-methylbutanoate + NADP(+) = (2S)-2-acetolactate + NADPH + H(+). It catalyses the reaction (2R,3R)-2,3-dihydroxy-3-methylpentanoate + NADP(+) = (S)-2-ethyl-2-hydroxy-3-oxobutanoate + NADPH + H(+). The protein operates within amino-acid biosynthesis; L-isoleucine biosynthesis; L-isoleucine from 2-oxobutanoate: step 2/4. It functions in the pathway amino-acid biosynthesis; L-valine biosynthesis; L-valine from pyruvate: step 2/4. Its function is as follows. Involved in the biosynthesis of branched-chain amino acids (BCAA). Catalyzes an alkyl-migration followed by a ketol-acid reduction of (S)-2-acetolactate (S2AL) to yield (R)-2,3-dihydroxy-isovalerate. In the isomerase reaction, S2AL is rearranged via a Mg-dependent methyl migration to produce 3-hydroxy-3-methyl-2-ketobutyrate (HMKB). In the reductase reaction, this 2-ketoacid undergoes a metal-dependent reduction by NADPH to yield (R)-2,3-dihydroxy-isovalerate. The sequence is that of Ketol-acid reductoisomerase (NADP(+)) from Salinibacter ruber (strain DSM 13855 / M31).